The following is a 384-amino-acid chain: Probable zinc-binding alcohol dehydrogenase Rv1895 (384 aa).

Residues Cys38, His59, Cys89, Cys92, Cys95, and Cys103 each coordinate Zn(2+).

It belongs to the zinc-containing alcohol dehydrogenase family. It depends on Zn(2+) as a cofactor.

It carries out the reaction a primary alcohol + NAD(+) = an aldehyde + NADH + H(+). It catalyses the reaction a secondary alcohol + NAD(+) = a ketone + NADH + H(+). The sequence is that of Probable zinc-binding alcohol dehydrogenase Rv1895 from Mycobacterium tuberculosis (strain ATCC 25618 / H37Rv).